Reading from the N-terminus, the 166-residue chain is Lithostathine-1-alpha (166 aa).

The first 22 residues, 1 to 22 (MAQTSSYFMLISCLMFLSQSQG), serve as a signal peptide directing secretion. Gln-23 bears the Pyrrolidone carboxylic acid mark. A glycan (O-linked (GalNAc) threonine) is linked at Thr-27. Residues 34-164 (ISCPEGTNAY…EDKFSFVCKF (131 aa)) form the C-type lectin domain. 3 cysteine pairs are disulfide-bonded: Cys-36/Cys-47, Cys-64/Cys-162, and Cys-137/Cys-154.

In terms of processing, the composition of the O-linked carbohydrate on Thr-27 is complex and varied. In the crystallographic structure, the attached sugar appears to be N-acetylglucosamine, typical of an intracellular protein, rather than N-acetylgalactosamine. In pancreatic acinar cells and, in lower levels, in brain. Enhanced expression of PSP-related transcripts and intraneuronal accumulation of PSP-like proteins is found in brain from Alzheimer disease and Down syndrome patients.

The protein localises to the secreted. In terms of biological role, might act as an inhibitor of spontaneous calcium carbonate precipitation. May be associated with neuronal sprouting in brain, and with brain and pancreas regeneration. This is Lithostathine-1-alpha (REG1A) from Homo sapiens (Human).